Reading from the N-terminus, the 374-residue chain is Protein RecA (374 aa).

66 to 73 provides a ligand contact to ATP; that stretch reads GPESSGKT. The tract at residues 326 to 374 is disordered; that stretch reads KLGVGVHPEESATEPGADAASAAPADAAPAVPAPTTAKATKSKATAAKS. Positions 338-374 are enriched in low complexity; it reads TEPGADAASAAPADAAPAVPAPTTAKATKSKATAAKS.

This sequence belongs to the RecA family.

The protein localises to the cytoplasm. Functionally, can catalyze the hydrolysis of ATP in the presence of single-stranded DNA, the ATP-dependent uptake of single-stranded DNA by duplex DNA, and the ATP-dependent hybridization of homologous single-stranded DNAs. It interacts with LexA causing its activation and leading to its autocatalytic cleavage. The sequence is that of Protein RecA from Streptomyces coelicolor (strain ATCC BAA-471 / A3(2) / M145).